We begin with the raw amino-acid sequence, 234 residues long: Cytochrome b (234 aa).

4 consecutive transmembrane segments (helical) span residues 33 to 53 (FGSL…FLAM), 77 to 98 (WLIR…YMHV), 113 to 133 (WNIG…GYVL), and 178 to 198 (FFAF…IHLL). Residues histidine 83 and histidine 97 each coordinate heme b. Heme b is bound by residues histidine 182 and histidine 196. A ubiquinone is bound at residue histidine 201. Residues 226 to 234 (IKDVLGFLM) form a helical membrane-spanning segment.

This sequence belongs to the cytochrome b family. In terms of assembly, the cytochrome bc1 complex contains 11 subunits: 3 respiratory subunits (MT-CYB, CYC1 and UQCRFS1), 2 core proteins (UQCRC1 and UQCRC2) and 6 low-molecular weight proteins (UQCRH/QCR6, UQCRB/QCR7, UQCRQ/QCR8, UQCR10/QCR9, UQCR11/QCR10 and a cleavage product of UQCRFS1). This cytochrome bc1 complex then forms a dimer. Heme b is required as a cofactor.

The protein localises to the mitochondrion inner membrane. Its function is as follows. Component of the ubiquinol-cytochrome c reductase complex (complex III or cytochrome b-c1 complex) that is part of the mitochondrial respiratory chain. The b-c1 complex mediates electron transfer from ubiquinol to cytochrome c. Contributes to the generation of a proton gradient across the mitochondrial membrane that is then used for ATP synthesis. The protein is Cytochrome b (MT-CYB) of Lepus alleni (Antelope jackrabbit).